A 235-amino-acid chain; its full sequence is Aspartate/glutamate leucyltransferase (235 aa).

It belongs to the R-transferase family. Bpt subfamily.

The protein localises to the cytoplasm. It carries out the reaction N-terminal L-glutamyl-[protein] + L-leucyl-tRNA(Leu) = N-terminal L-leucyl-L-glutamyl-[protein] + tRNA(Leu) + H(+). The catalysed reaction is N-terminal L-aspartyl-[protein] + L-leucyl-tRNA(Leu) = N-terminal L-leucyl-L-aspartyl-[protein] + tRNA(Leu) + H(+). Its function is as follows. Functions in the N-end rule pathway of protein degradation where it conjugates Leu from its aminoacyl-tRNA to the N-termini of proteins containing an N-terminal aspartate or glutamate. The sequence is that of Aspartate/glutamate leucyltransferase from Pseudomonas putida (strain ATCC 700007 / DSM 6899 / JCM 31910 / BCRC 17059 / LMG 24140 / F1).